Reading from the N-terminus, the 190-residue chain is Transcription antitermination protein NusB (190 aa).

Residues 158–190 form a disordered region; that stretch reads AGTSEDHVPQREPAAGQLGQDDSNGGQVAAVCR.

This sequence belongs to the NusB family.

Its function is as follows. Involved in transcription antitermination. Required for transcription of ribosomal RNA (rRNA) genes. Binds specifically to the boxA antiterminator sequence of the ribosomal RNA (rrn) operons. This chain is Transcription antitermination protein NusB, found in Mycobacterium leprae (strain TN).